The following is a 98-amino-acid chain: Small ribosomal subunit protein eS24 (98 aa).

This sequence belongs to the eukaryotic ribosomal protein eS24 family. Part of the 30S ribosomal subunit.

This chain is Small ribosomal subunit protein eS24, found in Thermococcus kodakarensis (strain ATCC BAA-918 / JCM 12380 / KOD1) (Pyrococcus kodakaraensis (strain KOD1)).